We begin with the raw amino-acid sequence, 191 residues long: dTTP/UTP pyrophosphatase (191 aa).

Asp64 acts as the Proton acceptor in catalysis.

It belongs to the Maf family. YhdE subfamily. The cofactor is a divalent metal cation.

Its subcellular location is the cytoplasm. The catalysed reaction is dTTP + H2O = dTMP + diphosphate + H(+). It catalyses the reaction UTP + H2O = UMP + diphosphate + H(+). In terms of biological role, nucleoside triphosphate pyrophosphatase that hydrolyzes dTTP and UTP. May have a dual role in cell division arrest and in preventing the incorporation of modified nucleotides into cellular nucleic acids. This is dTTP/UTP pyrophosphatase from Thermosipho africanus (strain TCF52B).